A 137-amino-acid polypeptide reads, in one-letter code: uncharacterized protein (137 aa).

This is an uncharacterized protein from Mycobacterium tuberculosis (strain ATCC 25618 / H37Rv).